The chain runs to 649 residues: Protein WHI4 (649 aa).

2 positions are modified to phosphoserine: Ser22 and Ser206. Disordered stretches follow at residues 196 to 217 and 228 to 247; these read EHVS…SSAQ and ISYG…KPRP. The segment covering 228 to 238 has biased composition (polar residues); sequence ISYGKTSSSPL. 2 positions are modified to phosphoserine: Ser258 and Ser283. 2 disordered regions span residues 438 to 461 and 604 to 649; these read LDLN…SIFN and QLPH…YGKS. The 93-residue stretch at 533–625 folds into the RRM domain; sequence NTLYVGNLPP…GGIRLSFSKN (93 aa). Positions 631 to 649 are enriched in polar residues; the sequence is GSNSRSKSGYSFNGSYGKS.

In terms of processing, phosphorylated by PKA in vitro.

Its subcellular location is the cytoplasm. Functionally, has a partially redundant function to WHI3, a dosage-dependent modulator of cell size. The chain is Protein WHI4 (WHI4) from Saccharomyces cerevisiae (strain ATCC 204508 / S288c) (Baker's yeast).